The chain runs to 253 residues: MKFNIVSPVALSCLFFLFLTGTLAQNAGSIVTRELFEQMLSFRNNDACPAKGFYTYDAFIAAANSFPGFGTTGDDTARKKEIAAFFGQTSHETKGGSAGTFTGGYCFVRQIDQSDRYYGRGPIQLTHQSNYERAGQGIGVGQDLVNNPDLVATDPIISFRTAIWFWMTAQDNKPSCHNVIIGQWTPSPADTAANRVPGYGVITNIINGGLECNMGPNTAVESRIGFYRRYCGMLNVPTGENLDCNNQKNFAQG.

Positions 1–24 are cleaved as a signal peptide; the sequence is MKFNIVSPVALSCLFFLFLTGTLA. The active-site Proton donor is Glu-92. Cys-212 and Cys-244 form a disulfide bridge.

The protein belongs to the glycosyl hydrolase 19 family. Chitinase class II subfamily.

It is found in the secreted. The protein localises to the extracellular space. It catalyses the reaction Random endo-hydrolysis of N-acetyl-beta-D-glucosaminide (1-&gt;4)-beta-linkages in chitin and chitodextrins.. In terms of biological role, defense against chitin-containing fungal pathogens. The polypeptide is Acidic endochitinase pcht28 (Solanum chilense (Tomato)).